Consider the following 186-residue polypeptide: dCTP deaminase (186 aa).

107–112 lines the dCTP pocket; it reads KSTYAR. The active-site Proton donor/acceptor is the glutamate 133. 3 residues coordinate dCTP: glutamine 152, tyrosine 166, and glutamine 176.

This sequence belongs to the dCTP deaminase family. As to quaternary structure, homotrimer.

The enzyme catalyses dCTP + H2O + H(+) = dUTP + NH4(+). It functions in the pathway pyrimidine metabolism; dUMP biosynthesis; dUMP from dCTP (dUTP route): step 1/2. Functionally, catalyzes the deamination of dCTP to dUTP. This Campylobacter lari (strain RM2100 / D67 / ATCC BAA-1060) protein is dCTP deaminase.